A 683-amino-acid polypeptide reads, in one-letter code: Amino acid transporter heavy chain SLC3A1 (683 aa).

A compositionally biased stretch (basic and acidic residues) spans 1–10 (MNEDKDKRDS). Residues 1-50 (MNEDKDKRDSIQMSMKGCRTNNGFVQNEDIQEQDPDSRDTPQSNAVSIPA) are disordered. The Cytoplasmic portion of the chain corresponds to 1–86 (MNEDKDKRDS…ARYRVPREIL (86 aa)). Phosphoserine is present on Ser-10. Residues 87-107 (FWLTVVSVFLLIGATIAIIII) traverse the membrane as a helical; Signal-anchor for type II membrane protein segment. The Extracellular segment spans residues 108 to 683 (SPKCLDWWQA…SVLDLLYSSC (576 aa)). Asn-211 serves as a coordination point for Ca(2+). Residues Asn-211, Asn-238, and Asn-258 are each glycosylated (N-linked (GlcNAc...) asparagine). Cys-239 and Cys-270 are oxidised to a cystine. Residues Asp-281, Phe-315, Leu-316, and Glu-318 each contribute to the Ca(2+) site. Residue Asn-329 is glycosylated (N-linked (GlcNAc...) asparagine). Ser-383 bears the Phosphoserine mark. Residues Asn-510, Asn-520, and Asn-574 are each glycosylated (N-linked (GlcNAc...) asparagine). Intrachain disulfides connect Cys-568-Cys-664 and Cys-671-Cys-683.

Disulfide-linked heterodimer composed of the catalytic light subunit SLC7A9 and the heavy subunit SLC3A1. The heterodimer is the minimal functional unit. Assembles in non-covalently linked heterotetramers (dimers of heterodimers) and higher order oligomers; the oligomerization is mediated by SLC3A1 likely to prevent degradation in the endoplasmic reticulum and facilitate heteromer trafficking to the plasma membrane. Disulfide-linked heterodimer composed of the catalytic light subunit SLC7A13 and the heavy subunit SLC3A1. Predominantly expressed in kidney and intestine. In kidney localized to the apical membrane of the proximal tubules.

The protein resides in the cell membrane. The protein localises to the apical cell membrane. Functionally, acts as a chaperone that facilitates biogenesis and trafficking of functional transporter heteromers to the plasma membrane. Associates with SLC7A9 to form a functional transporter complex that mediates the electrogenic exchange between cationic amino acids and neutral amino acids, with a stoichiometry of 1:1. SLC7A9-SLC3A1 transporter has system b(0,+)-like activity with high affinity for extracellular cationic amino acids and L-cystine and lower affinity for intracellular neutral amino acids. Substrate exchange is driven by high concentration of intracellular neutral amino acids and the intracellular reduction of L-cystine to L-cysteine. SLC7A9-SLC3A1 acts as a major transporter for reabsorption of L-cystine and dibasic amino acids across the brush border membrane in early proximal tubules. Associates with SLC7A13 to form a functional complex that transports anionic and neutral amino acids via exchange or facilitated diffusion. SLC7A13-SLC3A1 may act as a major transporter for L-cystine in late proximal tubules, ensuring its reabsorption from the luminal fluid in exchange for cytosolic L-glutamate or L-aspartate. This Rattus norvegicus (Rat) protein is Amino acid transporter heavy chain SLC3A1 (Slc3a1).